We begin with the raw amino-acid sequence, 200 residues long: Proteasome subunit beta 2 (200 aa).

Positions 1 to 10 (MSDQLELMTG) are cleaved as a propeptide — removed in mature form; by autocatalysis. T11 serves as the catalytic Nucleophile.

This sequence belongs to the peptidase T1B family. As to quaternary structure, the 20S proteasome core is composed of 14 alpha and 14 beta subunits that assemble into four stacked heptameric rings, resulting in a barrel-shaped structure. The two inner rings, each composed of seven catalytic beta subunits, are sandwiched by two outer rings, each composed of seven alpha subunits. The catalytic chamber with the active sites is on the inside of the barrel. Has a gated structure, the ends of the cylinder being occluded by the N-termini of the alpha-subunits. Is capped at one or both ends by the proteasome regulatory ATPase, PAN.

It localises to the cytoplasm. The enzyme catalyses Cleavage of peptide bonds with very broad specificity.. The formation of the proteasomal ATPase PAN-20S proteasome complex, via the docking of the C-termini of PAN into the intersubunit pockets in the alpha-rings, triggers opening of the gate for substrate entry. Interconversion between the open-gate and close-gate conformations leads to a dynamic regulation of the 20S proteasome proteolysis activity. Functionally, component of the proteasome core, a large protease complex with broad specificity involved in protein degradation. The sequence is that of Proteasome subunit beta 2 from Caldivirga maquilingensis (strain ATCC 700844 / DSM 13496 / JCM 10307 / IC-167).